An 871-amino-acid chain; its full sequence is Protein argonaute-2 (871 aa).

In terms of domain architecture, PAZ spans 232 to 351; sequence PVIEFMCEVL…LPLEVCNIVA (120 aa). Interaction with guide RNA stretches follow at residues 314 to 319 and 536 to 578; these read YFKDRH and GKTP…LCLK. The Piwi domain maps to 529–830; sequence LVVVILPGKT…VAFRARYHLV (302 aa). Residues 599-602 are interaction with GW182 family members; the sequence is FQQP. An a divalent metal cation-binding site is contributed by D609. Residues 662–672 form an interaction with GW182 family members region; the sequence is LIQFYKSTRFK. Residue D681 participates in a divalent metal cation binding. Interaction with guide RNA regions lie at residues 721 to 722, 765 to 773, and 802 to 824; these read KR, HAGIQGTSR, and YVRCTRSVSIPAPAYYAHLVAFR. A divalent metal cation is bound at residue H819. Residues 834–856 form a disordered region; the sequence is HDSAEGSHTSGQSNGRDQQALAK. The span at 839-850 shows a compositional bias: polar residues; that stretch reads GSHTSGQSNGRD.

This sequence belongs to the argonaute family. Ago subfamily. In terms of assembly, component of the RISC loading complex (RLC), or micro-RNA (miRNA) loading complex (miRLC), which is composed of dicer1, ago2 and tarbp2. Note that the trimeric RLC/miRLC is also referred to as RISC. Requires Mg(2+) as cofactor. The cofactor is Mn(2+).

It localises to the cytoplasm. The protein localises to the P-body. It carries out the reaction Endonucleolytic cleavage to 5'-phosphomonoester.. Its function is as follows. Required for RNA-mediated gene silencing (RNAi) by the RNA-induced silencing complex (RISC). The 'minimal RISC' appears to include ago2 bound to a short guide RNA such as a microRNA (miRNA) or short interfering RNA (siRNA). These guide RNAs direct RISC to complementary mRNAs that are targets for RISC-mediated gene silencing. The precise mechanism of gene silencing depends on the degree of complementarity between the miRNA or siRNA and its target. Binding of RISC to a perfectly complementary mRNA generally results in silencing due to endonucleolytic cleavage of the mRNA specifically by ago2. Binding of RISC to a partially complementary mRNA results in silencing through inhibition of translation, and this is independent of endonuclease activity. The inhibition of translational initiation leads to the accumulation of the affected mRNA in cytoplasmic processing bodies (P-bodies), where mRNA degradation may subsequently occur. The polypeptide is Protein argonaute-2 (ago2) (Xenopus tropicalis (Western clawed frog)).